The sequence spans 371 residues: Queuine tRNA-ribosyltransferase (371 aa).

The active-site Nucleophile is Asp90. Asp90 (proton acceptor) is an active-site residue. Residues 90 to 94, Ser91, Asp144, Gln189, and Gly215 contribute to the substrate site; that span reads DSGGF. Positions 246 to 252 are RNA binding; that stretch reads GVGTPEN. Asp265 functions as the Nucleophile in the catalytic mechanism. The RNA binding; important for wobble base 34 recognition stretch occupies residues 270 to 274; sequence TRNAR. Zn(2+) is bound by residues Cys303, Cys305, Cys308, and His334.

Belongs to the queuine tRNA-ribosyltransferase family. In terms of assembly, homodimer. Within each dimer, one monomer is responsible for RNA recognition and catalysis, while the other monomer binds to the replacement base PreQ1. Zn(2+) is required as a cofactor.

It catalyses the reaction 7-aminomethyl-7-carbaguanine + guanosine(34) in tRNA = 7-aminomethyl-7-carbaguanosine(34) in tRNA + guanine. It functions in the pathway tRNA modification; tRNA-queuosine biosynthesis. In terms of biological role, catalyzes the base-exchange of a guanine (G) residue with the queuine precursor 7-aminomethyl-7-deazaguanine (PreQ1) at position 34 (anticodon wobble position) in tRNAs with GU(N) anticodons (tRNA-Asp, -Asn, -His and -Tyr). Catalysis occurs through a double-displacement mechanism. The nucleophile active site attacks the C1' of nucleotide 34 to detach the guanine base from the RNA, forming a covalent enzyme-RNA intermediate. The proton acceptor active site deprotonates the incoming PreQ1, allowing a nucleophilic attack on the C1' of the ribose to form the product. After dissociation, two additional enzymatic reactions on the tRNA convert PreQ1 to queuine (Q), resulting in the hypermodified nucleoside queuosine (7-(((4,5-cis-dihydroxy-2-cyclopenten-1-yl)amino)methyl)-7-deazaguanosine). This chain is Queuine tRNA-ribosyltransferase, found in Helicobacter pylori (strain ATCC 700392 / 26695) (Campylobacter pylori).